A 257-amino-acid chain; its full sequence is tRNA pseudouridine synthase A (257 aa).

The active-site Nucleophile is Asp-52. Residue Tyr-111 participates in substrate binding.

The protein belongs to the tRNA pseudouridine synthase TruA family. In terms of assembly, homodimer.

It catalyses the reaction uridine(38/39/40) in tRNA = pseudouridine(38/39/40) in tRNA. Functionally, formation of pseudouridine at positions 38, 39 and 40 in the anticodon stem and loop of transfer RNAs. In Dinoroseobacter shibae (strain DSM 16493 / NCIMB 14021 / DFL 12), this protein is tRNA pseudouridine synthase A.